We begin with the raw amino-acid sequence, 107 residues long: SH3 domain-binding glutamic acid-rich-like protein 2 (107 aa).

Positions 61–67 (QGNPLPP) match the SH3-binding motif.

Belongs to the SH3BGR family. As to expression, highly expressed in brain, placenta, liver and kidney. Expressed in retina.

The protein localises to the nucleus. In Homo sapiens (Human), this protein is SH3 domain-binding glutamic acid-rich-like protein 2 (SH3BGRL2).